A 98-amino-acid chain; its full sequence is NADH-ubiquinone oxidoreductase chain 4L (98 aa).

Transmembrane regions (helical) follow at residues 1–21, 29–49, and 61–81; these read MSLIHINVFLAFTTSLMGLLM, SLLCLEGMMLSLFIMATMMVL, and IILLVFAACEAALGLSLLVMI.

It belongs to the complex I subunit 4L family. As to quaternary structure, core subunit of respiratory chain NADH dehydrogenase (Complex I) which is composed of 45 different subunits.

The protein localises to the mitochondrion inner membrane. The enzyme catalyses a ubiquinone + NADH + 5 H(+)(in) = a ubiquinol + NAD(+) + 4 H(+)(out). In terms of biological role, core subunit of the mitochondrial membrane respiratory chain NADH dehydrogenase (Complex I) which catalyzes electron transfer from NADH through the respiratory chain, using ubiquinone as an electron acceptor. Part of the enzyme membrane arm which is embedded in the lipid bilayer and involved in proton translocation. The sequence is that of NADH-ubiquinone oxidoreductase chain 4L (MT-ND4L) from Ceratotherium simum (White rhinoceros).